The primary structure comprises 370 residues: Cobalt-precorrin-5B C(1)-methyltransferase (370 aa).

It belongs to the CbiD family.

The enzyme catalyses Co-precorrin-5B + S-adenosyl-L-methionine = Co-precorrin-6A + S-adenosyl-L-homocysteine. It functions in the pathway cofactor biosynthesis; adenosylcobalamin biosynthesis; cob(II)yrinate a,c-diamide from sirohydrochlorin (anaerobic route): step 6/10. Catalyzes the methylation of C-1 in cobalt-precorrin-5B to form cobalt-precorrin-6A. This chain is Cobalt-precorrin-5B C(1)-methyltransferase, found in Pseudomonas syringae pv. tomato (strain ATCC BAA-871 / DC3000).